We begin with the raw amino-acid sequence, 494 residues long: MTDLTMLTIAQARDSLKKGDFKATELTEAYLQAIELANPILNAYVAVTAEQAMRMAAESDNRLAKGEAGILEGIPLGIKDLFATYDVHTQGCSYILDGFKPKYESTVTANLWKDGAVMLGKLNMDEFAMGSSNETSYYGPVINPWRKKGSDEKLVPGGSSGGSSAAVAARLCVGATATDTGGSIRQPAAFTGTVGIKPTYGRCSRWGTIAYASSLDQAGPIGRDVRDCAIMLRSMASFDRKDSTSVDLPIPDYEKCIGQSIKGMKIGIPKEYRLEWMSTEVIELWQKGMDFLKEAGAEIVDISLPHVKYALPSYYIVASAEASSNLARYDGVRFGLRMPGKDIVEMYEKTRSAGFGDEVKQRILIGTYVLSSGYYDAYYIKAQKVRTLIKNDFDQCFAIGVDAILTPVTPTPAFGLADEKIKNDSIAMYLNDIFTVPVNMVGLPGVSVPAGLSSSGLPLGLQLIGKPFAEEVILQIAYIIEQAAGTFSAKKWWP.

Catalysis depends on charge relay system residues Lys-79 and Ser-159. Ser-183 (acyl-ester intermediate) is an active-site residue.

Belongs to the amidase family. GatA subfamily. Heterotrimer of A, B and C subunits.

It catalyses the reaction L-glutamyl-tRNA(Gln) + L-glutamine + ATP + H2O = L-glutaminyl-tRNA(Gln) + L-glutamate + ADP + phosphate + H(+). Allows the formation of correctly charged Gln-tRNA(Gln) through the transamidation of misacylated Glu-tRNA(Gln) in organisms which lack glutaminyl-tRNA synthetase. The reaction takes place in the presence of glutamine and ATP through an activated gamma-phospho-Glu-tRNA(Gln). In Bartonella bacilliformis (strain ATCC 35685 / KC583 / Herrer 020/F12,63), this protein is Glutamyl-tRNA(Gln) amidotransferase subunit A.